The following is a 215-amino-acid chain: 3,4-dihydroxy-2-butanone 4-phosphate synthase (215 aa).

Residues 38-39, aspartate 43, 151-155, and glutamate 175 contribute to the D-ribulose 5-phosphate site; these read RE and RRGHT. Glutamate 39 contacts Mg(2+). Histidine 154 serves as a coordination point for Mg(2+).

This sequence belongs to the DHBP synthase family. Homodimer. Mg(2+) serves as cofactor. It depends on Mn(2+) as a cofactor.

It carries out the reaction D-ribulose 5-phosphate = (2S)-2-hydroxy-3-oxobutyl phosphate + formate + H(+). It participates in cofactor biosynthesis; riboflavin biosynthesis; 2-hydroxy-3-oxobutyl phosphate from D-ribulose 5-phosphate: step 1/1. Catalyzes the conversion of D-ribulose 5-phosphate to formate and 3,4-dihydroxy-2-butanone 4-phosphate. The chain is 3,4-dihydroxy-2-butanone 4-phosphate synthase from Haemophilus influenzae (strain 86-028NP).